The chain runs to 562 residues: uncharacterized protein (562 aa).

Helical transmembrane passes span 10–27 (IYPEIAVFLSLAIGYWVG), 34–53 (FSLGAVTATLLAAVVIGQFD), 63–85 (IFFLMFLFAVGYGIGPQFVQGIA), 92–114 (ALFAVVACLFSLLFPILCAKIAG), and 155–177 (FSVIPVAYAVTYIFGTVGSAIVL). 2 RCK C-terminal domains span residues 204–288 (TENA…HPDS) and 290–377 (DETQ…QLGV). A run of 6 helical transmembrane segments spans residues 387–404 (VAFWAFAIVIGALLGSLV), 408–430 (GNLPLTLSTAGGVLIAGLIFSWV), 443–465 (PTVWFMNSVGLNVFIAAIGISAG), 475–497 (LGFSLFLWGVVATTLPLFFAALV), 504–526 (FHPAILLGCCAGARTTTASLGMI), and 539–561 (YTITYAVGNTLLTMWGLVLILIL).

It belongs to the AAE transporter (TC 2.A.81) family.

It localises to the cell membrane. This is an uncharacterized protein from Shewanella oneidensis (strain ATCC 700550 / JCM 31522 / CIP 106686 / LMG 19005 / NCIMB 14063 / MR-1).